Here is a 1131-residue protein sequence, read N- to C-terminus: DNA polymerase II large subunit (1131 aa).

It belongs to the archaeal DNA polymerase II family. In terms of assembly, heterodimer of a large subunit and a small subunit.

It carries out the reaction DNA(n) + a 2'-deoxyribonucleoside 5'-triphosphate = DNA(n+1) + diphosphate. The enzyme catalyses Exonucleolytic cleavage in the 3'- to 5'-direction to yield nucleoside 5'-phosphates.. Functionally, possesses two activities: a DNA synthesis (polymerase) and an exonucleolytic activity that degrades single-stranded DNA in the 3'- to 5'-direction. Has a template-primer preference which is characteristic of a replicative DNA polymerase. This Methanococcus maripaludis (strain C7 / ATCC BAA-1331) protein is DNA polymerase II large subunit.